We begin with the raw amino-acid sequence, 562 residues long: Arginine--tRNA ligase (562 aa).

The 'HIGH' region signature appears at 122–132 (PNIAKPISMGH).

Belongs to the class-I aminoacyl-tRNA synthetase family. As to quaternary structure, monomer.

Its subcellular location is the cytoplasm. The enzyme catalyses tRNA(Arg) + L-arginine + ATP = L-arginyl-tRNA(Arg) + AMP + diphosphate. This is Arginine--tRNA ligase from Pediococcus pentosaceus (strain ATCC 25745 / CCUG 21536 / LMG 10740 / 183-1w).